A 952-amino-acid polypeptide reads, in one-letter code: Meiotic coiled-coil protein 3 (952 aa).

3 coiled-coil regions span residues 283 to 611, 684 to 716, and 839 to 942; these read QLLQ…KEHL, TKKF…EDKL, and SLEN…RERE.

It localises to the cytoplasm. In terms of biological role, has a role in meiosis. This chain is Meiotic coiled-coil protein 3 (mcp3), found in Schizosaccharomyces pombe (strain 972 / ATCC 24843) (Fission yeast).